The sequence spans 356 residues: Red-sensitive opsin-2 (356 aa).

Topologically, residues 1–48 are extracellular; sequence MAEWANAAFAARRRGDETTRDNAFSYTNSNNTRDPFEGPNYHIAPRWV. Asparagine 30 is a glycosylation site (N-linked (GlcNAc...) asparagine). The chain crosses the membrane as a helical span at residues 49 to 73; it reads YNVATVWMFFVVVASTFTNGLVLVA. Residues 74-85 are Cytoplasmic-facing; it reads TAKFKKLRHPLN. A helical membrane pass occupies residues 86 to 111; it reads WILVNLAIADLGETLFASTISVINQV. Over 112–125 the chain is Extracellular; it reads FGYFILGHPMCIFE. A disulfide bridge connects residues cysteine 122 and cysteine 199. A helical transmembrane segment spans residues 126–145; sequence GYTVSVCGIAGLWSLTVISW. Residues 146-164 are Cytoplasmic-facing; the sequence is ERWVVVCKPFGNVKFDGKW. The helical transmembrane segment at 165–188 threads the bilayer; it reads ASAGIIFSWVWAAVWCAPPIFGWS. At 189-214 the chain is on the extracellular side; it reads RYWPHGLKTSCGPDVFGGNEDPGVQS. The chain crosses the membrane as a helical span at residues 215–242; that stretch reads YMLVLMITCCILPLAIIILCYIAVFLAI. The Cytoplasmic segment spans residues 243 to 264; that stretch reads HAVAQQQKDSESTQKAEKEVSR. A helical transmembrane segment spans residues 265 to 288; it reads MVVVMILAFCLCWGPYTAFACFAA. At 289–296 the chain is on the extracellular side; it reads ANPGYAFH. Residues 297–321 form a helical membrane-spanning segment; the sequence is PLAAAMPAYFAKSATIYNPIIYVFM. Lysine 308 is subject to N6-(retinylidene)lysine. Topologically, residues 322–356 are cytoplasmic; the sequence is NRQFRVCIMQLFGKKVDDGSEVSTSKTEVSSVAPA.

This sequence belongs to the G-protein coupled receptor 1 family. Opsin subfamily. Phosphorylated on some or all of the serine and threonine residues present in the C-terminal region.

It localises to the membrane. Functionally, visual pigments are the light-absorbing molecules that mediate vision. They consist of an apoprotein, opsin, covalently linked to cis-retinal. The polypeptide is Red-sensitive opsin-2 (opn1lw2) (Danio rerio (Zebrafish)).